The primary structure comprises 243 residues: Probable transcriptional regulatory protein TTE1135 (243 aa).

This sequence belongs to the TACO1 family.

The protein resides in the cytoplasm. This chain is Probable transcriptional regulatory protein TTE1135, found in Caldanaerobacter subterraneus subsp. tengcongensis (strain DSM 15242 / JCM 11007 / NBRC 100824 / MB4) (Thermoanaerobacter tengcongensis).